A 322-amino-acid chain; its full sequence is Transmembrane and ubiquitin-like domain-containing protein 2 (322 aa).

A helical transmembrane segment spans residues 38-58; sequence VVAGVVVLILALVLAWLSTYV. Residues 88 to 168 form a disordered region; the sequence is VAGQGTPEPT…VRSEDSTCLP (81 aa). The span at 115–130 shows a compositional bias: gly residues; it reads EGGGDPTGEPGAGGGV. The region spanning 174–247 is the Ubiquitin-like domain; sequence ISVRLKFFND…IHCHRSPPGS (74 aa). Helical transmembrane passes span 267 to 287 and 296 to 316; these read LGVS…GVVW and FFTA…SFLV.

The protein resides in the membrane. The protein is Transmembrane and ubiquitin-like domain-containing protein 2 (TMUB2) of Bos taurus (Bovine).